A 549-amino-acid chain; its full sequence is Cytochrome c oxidase subunit 1 homolog, bacteroid (549 aa).

Transmembrane regions (helical) follow at residues 12 to 32 (IGES…VIAA), 39 to 59 (PFAF…FCIV), and 87 to 107 (FSSF…LIIA). His-131 contacts heme b. The next 8 membrane-spanning stretches (helical) occupy residues 132 to 152 (TSAV…FYVV), 168 to 188 (FVVV…LLGV), 201 to 221 (ADLW…ATII), 228 to 248 (IFVA…LHLG), 279 to 299 (GHNA…YYFI), 312 to 332 (LSII…PHHL), 344 to 364 (LGMT…INGL), and 382 to 402 (MLVV…MMSI). His-280, His-330, and His-331 together coordinate Cu cation. Positions 418 and 420 each coordinate heme b. The next 3 membrane-spanning stretches (helical) occupy residues 423 to 443 (ALGW…PWAW), 458 to 478 (FWVA…SGIL), and 512 to 532 (AGGG…WMTV).

It belongs to the heme-copper respiratory oxidase family. It depends on Cu(2+) as a cofactor. Heme b serves as cofactor.

The protein localises to the cell membrane. The catalysed reaction is 4 Fe(II)-[cytochrome c] + O2 + 8 H(+)(in) = 4 Fe(III)-[cytochrome c] + 2 H2O + 4 H(+)(out). It participates in energy metabolism; oxidative phosphorylation. In terms of biological role, cytochrome c oxidase is the component of the respiratory chain that catalyzes the reduction of oxygen to water. Subunits 1-3 form the functional core of the enzyme complex. Co I is the catalytic subunit of the enzyme. Electrons originating in cytochrome c or a quinol are transferred to the bimetallic center formed by a high-spin heme and copper B. In Bradyrhizobium diazoefficiens (strain JCM 10833 / BCRC 13528 / IAM 13628 / NBRC 14792 / USDA 110), this protein is Cytochrome c oxidase subunit 1 homolog, bacteroid (fixN).